A 429-amino-acid chain; its full sequence is Enolase (429 aa).

Position 167 (Q167) interacts with (2R)-2-phosphoglycerate. E209 serves as the catalytic Proton donor. 3 residues coordinate Mg(2+): D246, E289, and D316. Residues K341, R370, S371, and K392 each coordinate (2R)-2-phosphoglycerate. Catalysis depends on K341, which acts as the Proton acceptor.

Belongs to the enolase family. As to quaternary structure, component of the RNA degradosome, a multiprotein complex involved in RNA processing and mRNA degradation. Mg(2+) is required as a cofactor.

It localises to the cytoplasm. The protein resides in the secreted. The protein localises to the cell surface. It catalyses the reaction (2R)-2-phosphoglycerate = phosphoenolpyruvate + H2O. It functions in the pathway carbohydrate degradation; glycolysis; pyruvate from D-glyceraldehyde 3-phosphate: step 4/5. In terms of biological role, catalyzes the reversible conversion of 2-phosphoglycerate (2-PG) into phosphoenolpyruvate (PEP). It is essential for the degradation of carbohydrates via glycolysis. This is Enolase from Pseudomonas fluorescens (strain ATCC BAA-477 / NRRL B-23932 / Pf-5).